The following is a 310-amino-acid chain: MKKIASVLALFVALLFGLLACSKGTSSKSSSDKLKVVTTNSILADITKNIAGDKIELHSIVPVGQDPHEYEPLPEDVKKTSQADLIFYNGINLETGGNAWFTKLVKNANKVENKDYFAASDGVEVIYLEGQNQAGKEDPHAWLNLENGIIYAKNIAKQLIAKDPKNKDFYEKNLAAYTEKLSKLDQEAKQAFNNIPAEKKMIVTSEGCFKYFSKAYGVPSAYIWEINTEVEGTPEQIKTLLEKLRQTKVPSLFVESSVDERPMKTVSKDSNIPIFAKIFTDSIAKEGEEGDSYYSMMKWNLEKIAEGLNK.

The N-terminal stretch at 1–20 (MKKIASVLALFVALLFGLLA) is a signal peptide. C21 is lipidated: N-palmitoyl cysteine. A lipid anchor (S-diacylglycerol cysteine) is attached at C21. 4 residues coordinate Mn(2+): H68, H140, E206, and D281.

Belongs to the bacterial solute-binding protein 9 family. Lipoprotein receptor antigen (Lrai) subfamily.

The protein resides in the cell membrane. In terms of biological role, part of the ATP-binding cassette (ABC) transport system PsaABC involved in manganese import. Binds manganese with high affinity and specificity and delivers it to the membrane permease for translocation into the cytoplasm. Also acts as an adhesin which is involved on adherence to extracellular matrix. The sequence is that of Manganese ABC transporter substrate-binding lipoprotein PsaA from Streptococcus pneumoniae.